We begin with the raw amino-acid sequence, 298 residues long: Uricase (298 aa).

Active-site charge relay system residues include Lys18 and Thr63. Positions 63, 64, 165, 182, 229, 230, and 256 each coordinate urate. Residue His258 is the Charge relay system of the active site. The short motif at Ala296 to Met298 is the Microbody targeting signal element.

This sequence belongs to the uricase family. Homotetramer; dimer of dimers.

It localises to the peroxisome. The catalysed reaction is urate + O2 + H2O = 5-hydroxyisourate + H2O2. The protein operates within purine metabolism; urate degradation; (S)-allantoin from urate: step 1/3. Competitively inhibited by xanthine. Functionally, catalyzes the oxidation of uric acid to 5-hydroxyisourate, which is further processed to form (S)-allantoin. The chain is Uricase from Danio rerio (Zebrafish).